A 313-amino-acid chain; its full sequence is Extracellular metalloprotease (313 aa).

Residues 1–34 (MKLVPRFRKQWFAYLTVLCLALAAAVSFGVPAKA) form the signal peptide. The tract at residues 35 to 74 (AENPQTSVSNTGKEADATKNQTSKADQVSAPYEGTGKTSK) is disordered. Residues 35 to 93 (AENPQTSVSNTGKEADATKNQTSKADQVSAPYEGTGKTSKSLYGGQTELEKNIQTLQPS) constitute a propeptide that is removed on maturation. Residues 37-60 (NPQTSVSNTGKEADATKNQTSKAD) show a composition bias toward polar residues. A disulfide bridge links cysteine 131 with cysteine 147. Catalysis depends on charge relay system residues histidine 146 and serine 267.

It belongs to the peptidase S1B family. In terms of assembly, monomer.

The protein localises to the secreted. The sequence is that of Extracellular metalloprotease (mpr) from Bacillus subtilis (strain 168).